Consider the following 323-residue polypeptide: MIKVSAPGKILWIGSYSVVFGGISHVIAVNKRVSCSLREIKEKDSLIFHTSYGHFKNSGNELINSVLDTFRERLSQLPQGYEIDLYNDKEFIIDGKKTGLGSSSAATVSLTACLYYAIHGKLDLFEIHKLAQIANYKRQKGIGSGFDIASAVFGSIVYKRFTDLDKMDFYFEKLNLGNYDMMLGFTGKSSETVGLVRKFVEKSNLDDFKEIMRLIDEENYMAIKLIKLNKLDEAVEHIKLGRKYLNYIAERIVGVKLVSKMEEELIKIAEEEGALVALSPGAGGGDSIFALGNDLNRVREAWSKRGIFIIDVKEDEGLRLESN.

The protein belongs to the GHMP kinase family. Homodimer. Requires Mg(2+) as cofactor.

It catalyses the reaction (R)-5-phosphomevalonate + ATP = (R)-5-diphosphomevalonate + ADP. It participates in isoprenoid biosynthesis; isopentenyl diphosphate biosynthesis via mevalonate pathway; isopentenyl diphosphate from (R)-mevalonate: step 2/3. Catalyzes the phosphorylation of (R)-mevalonate 5-phosphate (MVAP) to (R)-mevalonate 5-diphosphate (MVAPP). Functions in the mevalonate (MVA) pathway leading to isopentenyl diphosphate (IPP), a key precursor for the biosynthesis of isoprenoid compounds such as archaeal membrane lipids. In Saccharolobus solfataricus (strain ATCC 35092 / DSM 1617 / JCM 11322 / P2) (Sulfolobus solfataricus), this protein is Phosphomevalonate kinase.